A 1285-amino-acid chain; its full sequence is Protein crumbs homolog 2 (1285 aa).

The signal sequence occupies residues 1–28; that stretch reads MALARPGTPDPQALASVLLLLLWAPALS. The segment at 1-350 is required for maximum inhibition of APP amyloid-beta peptide secretion; sequence MALARPGTPD…GFQCHCPDGY (350 aa). An EGF-like 1 domain is found at 67–106; that stretch reads EPRGCATQPCHHGALCVPQGPDPTGFRCYCVPGFQGPRCE. Intrachain disulfides connect Cys71–Cys82, Cys76–Cys94, Cys96–Cys105, Cys112–Cys123, Cys117–Cys132, Cys134–Cys143, Cys150–Cys161, Cys155–Cys170, Cys172–Cys181, Cys188–Cys199, Cys193–Cys208, Cys210–Cys220, Cys227–Cys238, Cys232–Cys247, Cys249–Cys258, Cys265–Cys276, Cys270–Cys306, Cys308–Cys317, Cys324–Cys335, Cys329–Cys344, Cys346–Cys355, Cys362–Cys373, Cys367–Cys382, Cys384–Cys393, Cys400–Cys411, Cys405–Cys424, and Cys426–Cys435. The EGF-like 2; calcium-binding domain occupies 108 to 144; it reads DIDECASRPCHHGATCRNLADRYECHCPLGYAGVTCE. One can recognise an EGF-like 3; calcium-binding domain in the interval 146-182; that stretch reads EVDECASAPCLHGGSCLDGVGSFRCVCAPGYGGTRCQ. In terms of domain architecture, EGF-like 4; calcium-binding spans 184-221; it reads DLDECQSQPCAHGGTCHDLVNGFRCDCAGTGYEGTHCE. EGF-like domains are found at residues 223 to 259 and 261 to 318; these read EVLECASAPCEHNASCLEGLGSFRCLCWPGYSGELCE and DEDE…ADCG. An N-linked (GlcNAc...) asparagine glycan is attached at Asn235. The O-linked (Glc...) serine glycan is linked to Ser267. One can recognise an EGF-like 7; calcium-binding domain in the interval 320–356; the sequence is EVDECASRPCLNGGHCQDLPNGFQCHCPDGYAGPTCE. The EGF-like 8; calcium-binding domain maps to 358–394; the sequence is DVDECLSDPCLHGGTCSDTVAGYICRCPETWGGRDCS. The region spanning 396–436 is the EGF-like 9 domain; that stretch reads QLTGCQGHTCPLAATCIPIFESGVHSYVCHCPPGTHGPFCG. In terms of domain architecture, Laminin G-like 1 spans 431–603; that stretch reads HGPFCGQNTT…DLGENVLLGC (173 aa). N-linked (GlcNAc...) asparagine glycans are attached at residues Asn438 and Asn478. 4 disulfide bridges follow: Cys579-Cys603, Cys609-Cys620, Cys614-Cys629, and Cys631-Cys640. Residues 605 to 641 form the EGF-like 10 domain; it reads RREQCRPLPCVHGGSCVDLWTHFRCDCARPHRGPTCA. The 159-residue stretch at 647 to 805 folds into the Laminin G-like 2 domain; the sequence is ATFGLGGAPS…RQSWNLTAGC (159 aa). N-linked (GlcNAc...) asparagine glycans are attached at residues Asn669, Asn690, Asn786, and Asn800. 4 disulfide bridges follow: Cys766–Cys805, Cys811–Cys822, Cys816–Cys831, and Cys833–Cys842. The 37-residue stretch at 807–843 folds into the EGF-like 11 domain; that stretch reads SEDMCSPDPCFNGGTCLVTWNDFHCTCPANFTGPTCA. N-linked (GlcNAc...) asparagine glycosylation is found at Asn836, Asn886, Asn926, and Asn1009. In terms of domain architecture, Laminin G-like 3 spans 871–1054; that stretch reads EATFREGPPA…PGTPAPILGC (184 aa). Disulfide bonds link Cys1013-Cys1054, Cys1060-Cys1071, Cys1065-Cys1080, Cys1082-Cys1091, Cys1098-Cys1108, Cys1103-Cys1118, Cys1120-Cys1129, Cys1138-Cys1150, Cys1144-Cys1159, Cys1161-Cys1170, Cys1177-Cys1188, Cys1182-Cys1197, and Cys1199-Cys1208. EGF-like domains are found at residues 1056 to 1092, 1094 to 1130, 1134 to 1171, and 1173 to 1209; these read GAPVCAPSPCLHDGACRDLFDAFACACGPGWEGPRCE, HVDPCHSAPCARGRCHTHPDGRFECRCPPGFGGPRCR, PSKECSLNVTCLDGSPCEGGSPAANCSCLEGLAGQRCQ, and PTLPCEANPCLNGGTCRAAGGVSECICNARFSGQFCE. N-linked (GlcNAc...) asparagine glycans are attached at residues Asn1141 and Asn1158. The chain crosses the membrane as a helical span at residues 1225-1245; the sequence is VAVPAACACLLLLLLGLLSGI. The tract at residues 1249-1285 is interaction with EPB41L5; it reads RKRRQSEGTYSPSQQEVAGARLEMDSVLKVPPEERLI.

It belongs to the Crumbs protein family. As to quaternary structure, associates with the gamma-secretase complex via interaction (via the transmembrane domain) with PSEN1/PS1. Interacts (via intracellular domain) with EPB41L5. Interacts with PALS1. O-glucosylated by POGLUT1 at Ser-267; consists of an O-glucose trisaccharide, in which the O-glucose is elongated by the addition of two xylose residues. O-glucosylation is required for localization at the plasma membrane. Post-translationally, N-glycosylated. In terms of tissue distribution, expressed in glomeruli, podocytes of the glomerular capillary loops, and parietal glomerular epithelial cells in the kidney (at protein level). Expressed in retina, fetal eye and brain. Also expressed in kidney, RPE/choroid, and at low levels in lung, placenta, and heart.

Its subcellular location is the apical cell membrane. It localises to the cytoplasm. The protein resides in the cell junction. It is found in the secreted. In terms of biological role, apical polarity protein that plays a central role during the epithelial-to-mesenchymal transition (EMT) at gastrulation, when newly specified mesodermal cells move inside the embryo. Acts by promoting cell ingression, the process by which cells leave the epithelial epiblast and move inside the embryo to form a new tissue layer. The anisotropic distribution of CRB2 and MYH10/myosin-IIB at cell edges define which cells will ingress: cells with high apical CRB2 are probably extruded from the epiblast by neighboring cells with high levels of apical MYH10/myosin-IIB. Plays a role in the maintenance of retinal neuroepithelium organization, structural integrity, adhesion, photoreceptor polarity and retinal photoreceptor layer thickness. May play a role in determining the length of cone photoreceptor outer segments and proliferation of late-born progenitor cells. Also required for maintenance of the apical polarity complex during development of the cortex. Inhibits gamma-secretase-dependent cleavage of APP and secretion of amyloid-beta peptide 40 and amyloid-beta peptide 42, and thereby inhibits gamma-secretase-dependent Notch transcription. This Homo sapiens (Human) protein is Protein crumbs homolog 2.